The sequence spans 150 residues: Lipoprotein signal peptidase (150 aa).

3 consecutive transmembrane segments (helical) span residues 8–28 (FYAL…LAHA), 58–78 (GFSW…GWFL), and 81–101 (TTGS…NVFD). Active-site residues include Asp-116 and Asp-132. The helical transmembrane segment at 126 to 146 (VVFNIADLFILAGVFGTFLFL) threads the bilayer.

Belongs to the peptidase A8 family.

The protein localises to the cell membrane. The enzyme catalyses Release of signal peptides from bacterial membrane prolipoproteins. Hydrolyzes -Xaa-Yaa-Zaa-|-(S,diacylglyceryl)Cys-, in which Xaa is hydrophobic (preferably Leu), and Yaa (Ala or Ser) and Zaa (Gly or Ala) have small, neutral side chains.. The protein operates within protein modification; lipoprotein biosynthesis (signal peptide cleavage). Functionally, this protein specifically catalyzes the removal of signal peptides from prolipoproteins. This Tropheryma whipplei (strain Twist) (Whipple's bacillus) protein is Lipoprotein signal peptidase.